A 384-amino-acid polypeptide reads, in one-letter code: Carbamoyl phosphate synthase small chain (384 aa).

A CPSase region spans residues 1–192 (MMKRIPAILV…LTDNIRVHRV (192 aa)). Residues serine 51, glycine 244, and glycine 246 each contribute to the L-glutamine site. A Glutamine amidotransferase type-1 domain is found at 196–382 (KVIVIDFGVK…IEIMTKSKNK (187 aa)). Cysteine 272 functions as the Nucleophile in the catalytic mechanism. Methionine 273, glutamine 276, asparagine 312, glycine 314, and phenylalanine 315 together coordinate L-glutamine. Active-site residues include histidine 355 and glutamate 357.

This sequence belongs to the CarA family. As to quaternary structure, composed of two chains; the small (or glutamine) chain promotes the hydrolysis of glutamine to ammonia, which is used by the large (or ammonia) chain to synthesize carbamoyl phosphate. Tetramer of heterodimers (alpha,beta)4.

The protein localises to the plastid. Its subcellular location is the chloroplast. It carries out the reaction hydrogencarbonate + L-glutamine + 2 ATP + H2O = carbamoyl phosphate + L-glutamate + 2 ADP + phosphate + 2 H(+). The catalysed reaction is L-glutamine + H2O = L-glutamate + NH4(+). The protein operates within amino-acid biosynthesis; L-arginine biosynthesis; carbamoyl phosphate from bicarbonate: step 1/1. It functions in the pathway pyrimidine metabolism; UMP biosynthesis via de novo pathway; (S)-dihydroorotate from bicarbonate: step 1/3. Its function is as follows. Small subunit of the glutamine-dependent carbamoyl phosphate synthetase (CPSase). CPSase catalyzes the formation of carbamoyl phosphate from the ammonia moiety of glutamine, carbonate, and phosphate donated by ATP, constituting the first step of 2 biosynthetic pathways, one leading to arginine and/or urea and the other to pyrimidine nucleotides. The small subunit (glutamine amidotransferase) binds and cleaves glutamine to supply the large subunit with the substrate ammonia. This Pyropia yezoensis (Susabi-nori) protein is Carbamoyl phosphate synthase small chain.